A 371-amino-acid chain; its full sequence is Cytochrome b (371 aa).

4 consecutive transmembrane segments (helical) span residues 25-45, 69-90, 105-125, and 170-190; these read FGSM…FLAI, WIMQ…YIHI, WLSG…GYVL, and FFAL…IHII. Positions 75 and 89 each coordinate heme b. The heme b site is built by His174 and His188. His193 is an a ubiquinone binding site. The next 4 membrane-spanning stretches (helical) occupy residues 218-238, 280-300, 312-332, and 339-358; these read YKDL…LSFS, LGGT…PFTH, LSQT…WTAT, and FITI…IMNP.

It belongs to the cytochrome b family. The cytochrome bc1 complex contains 3 respiratory subunits (MT-CYB, CYC1 and UQCRFS1), 2 core proteins (UQCRC1 and UQCRC2) and probably 6 low-molecular weight proteins. Heme b serves as cofactor.

Its subcellular location is the mitochondrion inner membrane. Component of the ubiquinol-cytochrome c reductase complex (complex III or cytochrome b-c1 complex) that is part of the mitochondrial respiratory chain. The b-c1 complex mediates electron transfer from ubiquinol to cytochrome c. Contributes to the generation of a proton gradient across the mitochondrial membrane that is then used for ATP synthesis. The polypeptide is Cytochrome b (MT-CYB) (Micrurus fulvius (Eastern coral snake)).